Consider the following 420-residue polypeptide: UDP-N-acetylglucosamine 1-carboxyvinyltransferase (420 aa).

22–23 contributes to the phosphoenolpyruvate binding site; that stretch reads KN. Arginine 92 contacts UDP-N-acetyl-alpha-D-glucosamine. Cysteine 116 acts as the Proton donor in catalysis. Residue cysteine 116 is modified to 2-(S-cysteinyl)pyruvic acid O-phosphothioketal. Residues aspartate 306 and isoleucine 328 each contribute to the UDP-N-acetyl-alpha-D-glucosamine site.

Belongs to the EPSP synthase family. MurA subfamily.

It localises to the cytoplasm. The enzyme catalyses phosphoenolpyruvate + UDP-N-acetyl-alpha-D-glucosamine = UDP-N-acetyl-3-O-(1-carboxyvinyl)-alpha-D-glucosamine + phosphate. It participates in cell wall biogenesis; peptidoglycan biosynthesis. Its function is as follows. Cell wall formation. Adds enolpyruvyl to UDP-N-acetylglucosamine. This Blochmanniella floridana protein is UDP-N-acetylglucosamine 1-carboxyvinyltransferase.